Consider the following 244-residue polypeptide: Serine-rich single-pass membrane protein 1 (244 aa).

A helical transmembrane segment spans residues 35-55; sequence CGTIGSFLLWYFVIVFVLMFF. Disordered stretches follow at residues 65–114, 126–191, and 210–244; these read DKKD…PVTN, QRRA…LGSY, and LAHH…FSKF. A compositionally biased stretch (basic and acidic residues) spans 80 to 94; sequence ASKETSCKRQSKDSA. Composition is skewed to polar residues over residues 96–114 and 132–142; these read DPSQ…PVTN and QSQFNEVNQNQ. Basic and acidic residues predominate over residues 161–176; the sequence is SWKESESEHHPSPDSI.

It localises to the membrane. This is Serine-rich single-pass membrane protein 1 (SSMEM1) from Homo sapiens (Human).